The primary structure comprises 162 residues: Ribonuclease P protein component (162 aa).

Residues 1–63 are disordered; that stretch reads MDEKDLATQP…PPAAGGKLLS (63 aa). Residues 21 to 38 are compositionally biased toward basic and acidic residues; it reads GPHEDPRRQEGVEAEKAE.

It belongs to the RnpA family. In terms of assembly, consists of a catalytic RNA component (M1 or rnpB) and a protein subunit.

It catalyses the reaction Endonucleolytic cleavage of RNA, removing 5'-extranucleotides from tRNA precursor.. RNaseP catalyzes the removal of the 5'-leader sequence from pre-tRNA to produce the mature 5'-terminus. It can also cleave other RNA substrates such as 4.5S RNA. The protein component plays an auxiliary but essential role in vivo by binding to the 5'-leader sequence and broadening the substrate specificity of the ribozyme. This Thermus scotoductus protein is Ribonuclease P protein component.